A 284-amino-acid chain; its full sequence is 4-hydroxybenzoate octaprenyltransferase (284 aa).

Transmembrane regions (helical) follow at residues 33 to 53, 93 to 113, 136 to 156, 159 to 179, 209 to 229, 231 to 248, and 264 to 284; these read VIAA…LGVF, IGLF…MNPL, YLPQ…AWAA, GELP…TIAY, LVIG…GQHY, LGQS…LFVY, and AFLN…IAFW.

It belongs to the UbiA prenyltransferase family. Mg(2+) serves as cofactor.

Its subcellular location is the cell inner membrane. It carries out the reaction all-trans-octaprenyl diphosphate + 4-hydroxybenzoate = 4-hydroxy-3-(all-trans-octaprenyl)benzoate + diphosphate. Its pathway is cofactor biosynthesis; ubiquinone biosynthesis. Functionally, catalyzes the prenylation of para-hydroxybenzoate (PHB) with an all-trans polyprenyl group. Mediates the second step in the final reaction sequence of ubiquinone-8 (UQ-8) biosynthesis, which is the condensation of the polyisoprenoid side chain with PHB, generating the first membrane-bound Q intermediate 3-octaprenyl-4-hydroxybenzoate. This chain is 4-hydroxybenzoate octaprenyltransferase, found in Vibrio campbellii (strain ATCC BAA-1116).